Reading from the N-terminus, the 344-residue chain is Methionine import ATP-binding protein MetN (344 aa).

An ABC transporter domain is found at 7–245 (ISLKKISRCF…PQDDTTIAML (239 aa)). 42 to 49 (GRSGAGKS) lines the ATP pocket.

It belongs to the ABC transporter superfamily. Methionine importer (TC 3.A.1.24) family. The complex is composed of two ATP-binding proteins (MetN), two transmembrane proteins (MetI) and a solute-binding protein (MetQ).

It is found in the cell inner membrane. The catalysed reaction is L-methionine(out) + ATP + H2O = L-methionine(in) + ADP + phosphate + H(+). The enzyme catalyses D-methionine(out) + ATP + H2O = D-methionine(in) + ADP + phosphate + H(+). Functionally, part of the ABC transporter complex MetNIQ involved in methionine import. Responsible for energy coupling to the transport system. The polypeptide is Methionine import ATP-binding protein MetN (Bartonella henselae (strain ATCC 49882 / DSM 28221 / CCUG 30454 / Houston 1) (Rochalimaea henselae)).